The primary structure comprises 625 residues: MNANLAHQPPQGRLSLLALSALGIVFGDIGTSPLYTFKTILGTGGQPTGAAAVLGALSLVIWTLFIITTVKYVMFAMRVDNDGEGGILALMALLGVKRQRRPTIVALGLFGAALIYGDGAITPAISVLSALEGLNMAAPALQPYVVPAAVVILLALFAIQSRGTASIGRLFGPVMLLWFVTIAVLGLVGIARHPTVFAAINPSYGLSYLVSNGATGFLVLGSVFLCVTGAEALYADMGHFGAGPIKLAWFAVVFPSLIINYAGQAALVIDGAPTDGNIFFRLCPDGLLLPLIGLATLATIIASQSVITGAFSMTRQAIQLGWMPRLAIKQTSSEGYGQIYVGAVNWLLMLVTVSLTIGFGKSDNLASAYGIAVSLTMLMTSALLFIAMREIWQWSLLAAGAVAGVFLTIDSAFFLANLTKIAEGGYVPLLLATSVYGLMWIWHRGAAAVAERMRERLIPVAQFMADIAEKKVPRVPGTAVFLTRTERGAPPVMLWHVKHNRALHEHLLVLRVEVISIPWVAPDDRLKIEELAPNVWRAEATFGFMERPHIPELLKASKARGCRIDLDDITYYVGHETVTARDDGKGLPAWQEQLFAAMERNSLHVSDFFSLPRDSVVEIGRQVAI.

Helical transmembrane passes span 14–34, 50–70, 104–124, 139–159, 170–190, 213–233, 249–269, 287–307, 339–359, 368–388, 396–416, and 421–441; these read LSLL…TSPL, AAAV…ITTV, IVAL…ITPA, PALQ…LFAI, LFGP…LVGI, GATG…AEAL, WFAV…ALVI, LLLP…QSVI, IYVG…TIGF, AYGI…FIAM, LLAA…FFLA, and IAEG…LMWI.

The protein belongs to the HAK/KUP transporter (TC 2.A.72) family.

The protein resides in the cell inner membrane. The enzyme catalyses K(+)(in) + H(+)(in) = K(+)(out) + H(+)(out). Its function is as follows. Transport of potassium into the cell. Likely operates as a K(+):H(+) symporter. This chain is Probable potassium transport system protein Kup 1, found in Bradyrhizobium sp. (strain ORS 278).